A 329-amino-acid chain; its full sequence is UDP-N-acetylenolpyruvoylglucosamine reductase (329 aa).

Residues 28 to 192 (RVGGPADLLC…ARVEVRLHAG (165 aa)) enclose the FAD-binding PCMH-type domain. Residue Arg172 is part of the active site. Positions 202 to 227 (REDRERRRATQPLDRPTFGSTFTNPP) are disordered. Catalysis depends on Ser221, which acts as the Proton donor. Glu291 is an active-site residue. The disordered stretch occupies residues 307-329 (DGHAAAGGGPGAASGGVRPPEAT). A compositionally biased stretch (gly residues) spans 311–320 (AAGGGPGAAS).

Belongs to the MurB family. FAD serves as cofactor.

It localises to the cytoplasm. The catalysed reaction is UDP-N-acetyl-alpha-D-muramate + NADP(+) = UDP-N-acetyl-3-O-(1-carboxyvinyl)-alpha-D-glucosamine + NADPH + H(+). It functions in the pathway cell wall biogenesis; peptidoglycan biosynthesis. Functionally, cell wall formation. The polypeptide is UDP-N-acetylenolpyruvoylglucosamine reductase (Anaeromyxobacter sp. (strain K)).